A 165-amino-acid chain; its full sequence is Endoribonuclease YbeY (165 aa).

Residues H130, H134, and H140 each contribute to the Zn(2+) site.

The protein belongs to the endoribonuclease YbeY family. Zn(2+) serves as cofactor.

It is found in the cytoplasm. Single strand-specific metallo-endoribonuclease involved in late-stage 70S ribosome quality control and in maturation of the 3' terminus of the 16S rRNA. The sequence is that of Endoribonuclease YbeY from Streptococcus gordonii (strain Challis / ATCC 35105 / BCRC 15272 / CH1 / DL1 / V288).